We begin with the raw amino-acid sequence, 403 residues long: Phosphopentomutase (403 aa).

Asp-13, Asp-298, His-303, Asp-339, His-340, and His-351 together coordinate Mn(2+).

Belongs to the phosphopentomutase family. It depends on Mn(2+) as a cofactor.

Its subcellular location is the cytoplasm. It catalyses the reaction 2-deoxy-alpha-D-ribose 1-phosphate = 2-deoxy-D-ribose 5-phosphate. It carries out the reaction alpha-D-ribose 1-phosphate = D-ribose 5-phosphate. Its pathway is carbohydrate degradation; 2-deoxy-D-ribose 1-phosphate degradation; D-glyceraldehyde 3-phosphate and acetaldehyde from 2-deoxy-alpha-D-ribose 1-phosphate: step 1/2. Isomerase that catalyzes the conversion of deoxy-ribose 1-phosphate (dRib-1-P) and ribose 1-phosphate (Rib-1-P) to deoxy-ribose 5-phosphate (dRib-5-P) and ribose 5-phosphate (Rib-5-P), respectively. This chain is Phosphopentomutase, found in Streptococcus pyogenes serotype M12 (strain MGAS2096).